The primary structure comprises 468 residues: Protein C-ets-2 (468 aa).

The 86-residue stretch at alanine 85–asparagine 170 folds into the PNT domain. A phosphoserine mark is found at serine 220 and serine 225. The disordered stretch occupies residues valine 262–serine 290. A phosphoserine mark is found at serine 294, serine 297, and serine 300. The segment at residues isoleucine 362–valine 442 is a DNA-binding region (ETS).

This sequence belongs to the ETS family. Phosphorylation by CDK10 at Ser-220 and Ser-225 creates a phosphodegron that targets ETS2 for proteasomal degradation.

It is found in the nucleus. Its function is as follows. Transcription factor activating transcription. Binds specifically the GGA DNA motif in gene promoters and stimulates transcription of those genes. This Mus musculus (Mouse) protein is Protein C-ets-2 (Ets2).